A 2216-amino-acid chain; its full sequence is RNA-directed RNA polymerase L (2216 aa).

The segment at 26 to 289 is endonuclease; the sequence is KTSFLSQVNL…ETRTAMLDER (264 aa). Mn(2+) is bound by residues Glu-51, Asp-88, and Glu-101. Residue Lys-114 is part of the active site. In terms of domain architecture, RdRp catalytic spans 1167–1364; it reads LDMKCVVRLS…YLSSKFNKFV (198 aa). Asp-1323 contacts Mg(2+).

Belongs to the Bunyavirales RNA polymerase family. In terms of assembly, homomultimer; the oligomeric structure is essential for the polymerase activity. Interacts with nucleoprotein N. Interacts with protein Z; this interaction inhibits viral transcription and replication, Z partially blocks the product exit tunnel for the releasing nascent RNA product. It depends on Mn(2+) as a cofactor. Mg(2+) serves as cofactor.

The protein localises to the virion. Its subcellular location is the host cytoplasm. The catalysed reaction is RNA(n) + a ribonucleoside 5'-triphosphate = RNA(n+1) + diphosphate. In terms of biological role, RNA-dependent RNA polymerase, which is responsible for the replication and transcription of the viral RNA genome using antigenomic RNA as an intermediate. During transcription, synthesizes subgenomic RNAs and assures their capping by a cap-snatching mechanism, which involves the endonuclease activity cleaving the host capped pre-mRNAs. These short capped RNAs are then used as primers for viral transcription. The 3'-end of subgenomic mRNAs molecules are heterogeneous and not polyadenylated. The replicase function is to direct synthesis of antigenomic and genomic RNA which are encapsidated and non capped. As a consequence of the use of the same enzyme for both transcription and replication, these mechanisms need to be well coordinated. These processes may be regulated by proteins N and Z in a dose-dependent manner. Z protein inhibits the viral polymerase L und thus the viral transcription and RNA synthesis. This chain is RNA-directed RNA polymerase L, found in Bear Canyon mammarenavirus (isolate Mouse/United States/AV A0070039/2000) (BCNV).